Here is a 525-residue protein sequence, read N- to C-terminus: Zinc finger protein 678 (525 aa).

14 C2H2-type zinc fingers span residues 97-119 (FQCI…KRIH), 125-147 (YKCE…KRIH), 153-175 (YKCD…KKIH), 181-203 (YKCD…KKIH), 209-231 (YPCE…KRIH), 237-259 (YKCK…KRIH), 265-287 (YKCE…RRIH), 293-315 (YKCE…KRIH), 321-343 (YQCE…KRIH), 349-371 (YKCE…KRIH), 377-399 (YKCK…RRIH), 405-427 (YKCE…KRIH), 433-455 (YKCK…KRIH), and 461-483 (YKCE…KRIH). The segment at 489-511 (YKCKECGKGFYQSSIHSKYKRIY) adopts a C2H2-type 15; degenerate zinc-finger fold.

Belongs to the krueppel C2H2-type zinc-finger protein family.

Its subcellular location is the nucleus. May be involved in transcriptional regulation. This is Zinc finger protein 678 (ZNF678) from Homo sapiens (Human).